The following is a 252-amino-acid chain: Enolase-phosphatase E1 (252 aa).

Mg(2+) contacts are provided by D14 and E16. Substrate contacts are provided by residues 143–144 (SS) and K177. A Mg(2+)-binding site is contributed by D202.

This sequence belongs to the HAD-like hydrolase superfamily. MasA/MtnC family. As to quaternary structure, monomer. Requires Mg(2+) as cofactor.

The protein resides in the cytoplasm. It is found in the nucleus. The catalysed reaction is 5-methylsulfanyl-2,3-dioxopentyl phosphate + H2O = 1,2-dihydroxy-5-(methylsulfanyl)pent-1-en-3-one + phosphate. Its pathway is amino-acid biosynthesis; L-methionine biosynthesis via salvage pathway; L-methionine from S-methyl-5-thio-alpha-D-ribose 1-phosphate: step 3/6. The protein operates within amino-acid biosynthesis; L-methionine biosynthesis via salvage pathway; L-methionine from S-methyl-5-thio-alpha-D-ribose 1-phosphate: step 4/6. In terms of biological role, bifunctional enzyme that catalyzes the enolization of 2,3-diketo-5-methylthiopentyl-1-phosphate (DK-MTP-1-P) into the intermediate 2-hydroxy-3-keto-5-methylthiopentenyl-1-phosphate (HK-MTPenyl-1-P), which is then dephosphorylated to form the acireductone 1,2-dihydroxy-3-keto-5-methylthiopentene (DHK-MTPene). The sequence is that of Enolase-phosphatase E1 from Drosophila persimilis (Fruit fly).